The primary structure comprises 391 residues: G-patch domain-containing protein 1 (391 aa).

In terms of domain architecture, G-patch spans 15–61 (KDSAAFKLMKSMGWEEGEGLGKDKQGIKGYVRVTNKQDTSGVGLDKP). 2 disordered regions span residues 80-132 (VQAA…EKGK) and 212-307 (KASE…PAKR). Composition is skewed to acidic residues over residues 92–102 (DDSDKEDESED) and 265–295 (NSDDDDDDDDDDDEEDEEEDEDESEADDDDK). The Nuclear localization signal motif lies at 305 to 312 (AKRKHDEI).

As to expression, strongly expressed in tissues with high cell proliferation activity that have a high demand for ribosome production such as shoot tips, leaves primordia, root tips and floral buds.

It is found in the nucleus. The protein resides in the nucleolus. Involved in ribosome biogenesis, required for normal progression of rRNA processing. Seems to promote cell proliferation in leaves. The sequence is that of G-patch domain-containing protein 1 from Arabidopsis thaliana (Mouse-ear cress).